Consider the following 72-residue polypeptide: Protein kish-A (72 aa).

An N-terminal signal peptide occupies residues 1-26 (MSAIFNFQSLLTVILLLICTCAYIRS). Topologically, residues 27 to 53 (LAPSLLDRNKTGLLGIFWKCARIGERK) are extracellular. Asparagine 35 carries an N-linked (GlcNAc...) asparagine glycan. A helical membrane pass occupies residues 54–71 (SPYVAVCCIVMAFSILFI). Residue glutamine 72 is a topological domain, cytoplasmic.

It belongs to the KISH family.

The protein resides in the golgi apparatus membrane. In terms of biological role, involved in the early part of the secretory pathway. The protein is Protein kish-A (TMEM167A) of Bos taurus (Bovine).